We begin with the raw amino-acid sequence, 500 residues long: MAAASVSAASGSHLSNSFAEPSRSNGSMVRHSSSPYVVYPSDKPFLNSDLRRSPSKPTLAYPESNSRAIFSALKNLQDKIRRLELERIQAEESVKTLSRETIEYKKVLDEQIQERENSKNEESKHNQELTSQLLAAENKCNLLEKQLEYMRNMIKHAEMERTSVLEKQVSLERERQHDQTHVQSQLEKLDLLEQEYNKLTTMQALAEKKMQELEAKLHEEEQERKRMQAKAAELQTGLETNRLIFEDKATPCVPNARRIKKKKSKPPEKKSSRNYFGAQPHYRLCLGDMPFVAGKSTSPSHAVVANVQLVLHLMKQHSKALCNDRVINSIPLAKQVSSRGGKSKKLSVTPPSSNGINEELSEVLQTLQDEFGQMSFDHQQLAKLIQESPTVELKDKLECELEALVGRMEAKANQITKVRKYQAQLEKQKLEKQKKELKATKKTLDEERNSSSRSGITGTTNKKDFMKLRPGEKRRKNLQLLKDMQSIQNSLQSSSLCWDY.

Low complexity predominate over residues 1–17 (MAAASVSAASGSHLSNS). 2 disordered regions span residues 1–34 (MAAASVSAASGSHLSNSFAEPSRSNGSMVRHSSS) and 43–62 (KPFLNSDLRRSPSKPTLAYP). The span at 18–34 (FAEPSRSNGSMVRHSSS) shows a compositional bias: polar residues. 2 positions are modified to phosphoserine: S53 and S55. The tract at residues 58–239 (TLAYPESNSR…KAAELQTGLE (182 aa)) is centrosome localization domain (CLD). 2 coiled-coil regions span residues 63 to 242 (ESNS…ETNR) and 392 to 492 (ELKD…NSLQ). A mediates interaction with microtubules region spans residues 277-491 (GAQPHYRLCL…KDMQSIQNSL (215 aa)). Residues 434–450 (KKELKATKKTLDEERNS) are compositionally biased toward basic and acidic residues. The tract at residues 434 to 472 (KKELKATKKTLDEERNSSSRSGITGTTNKKDFMKLRPGE) is disordered. The span at 451 to 460 (SSRSGITGTT) shows a compositional bias: polar residues. The segment covering 461–471 (NKKDFMKLRPG) has biased composition (basic and acidic residues).

This sequence belongs to the translokin family. As to quaternary structure, homodimer and homooligomer. Interacts with microtubules. Interacts with FGF2 and RAP80. Does not interact with FGF1 or FGF2 isoform 24 kDa. Ubiquitous.

The protein resides in the nucleus. It localises to the cytoplasm. The protein localises to the cytoskeleton. It is found in the microtubule organizing center. Its subcellular location is the centrosome. Centrosomal protein which may be required for microtubule attachment to centrosomes. May act by forming ring-like structures around microtubules. Mediates nuclear translocation and mitogenic activity of the internalized growth factor FGF2, but that of FGF1. The chain is Centrosomal protein of 57 kDa (CEP57) from Homo sapiens (Human).